The sequence spans 81 residues: Large ribosomal subunit protein bL31B (81 aa).

This sequence belongs to the bacterial ribosomal protein bL31 family. Type B subfamily. In terms of assembly, part of the 50S ribosomal subunit.

This is Large ribosomal subunit protein bL31B from Bacillus licheniformis (strain ATCC 14580 / DSM 13 / JCM 2505 / CCUG 7422 / NBRC 12200 / NCIMB 9375 / NCTC 10341 / NRRL NRS-1264 / Gibson 46).